The primary structure comprises 183 residues: Segregation and condensation protein B (183 aa).

The protein belongs to the ScpB family. In terms of assembly, homodimer. Homodimerization may be required to stabilize the binding of ScpA to the Smc head domains. Component of a cohesin-like complex composed of ScpA, ScpB and the Smc homodimer, in which ScpA and ScpB bind to the head domain of Smc. The presence of the three proteins is required for the association of the complex with DNA.

It is found in the cytoplasm. Functionally, participates in chromosomal partition during cell division. May act via the formation of a condensin-like complex containing Smc and ScpA that pull DNA away from mid-cell into both cell halves. The polypeptide is Segregation and condensation protein B (Streptococcus pyogenes serotype M1).